The chain runs to 262 residues: Type III pantothenate kinase (262 aa).

Residue aspartate 9 to lysine 16 coordinates ATP. Substrate contacts are provided by residues tyrosine 93 and glycine 100–arginine 103. Aspartate 102 acts as the Proton acceptor in catalysis. Residue aspartate 122 participates in K(+) binding. Threonine 125 is a binding site for ATP. Residue threonine 175 coordinates substrate.

This sequence belongs to the type III pantothenate kinase family. Homodimer. The cofactor is NH4(+). K(+) serves as cofactor.

The protein resides in the cytoplasm. The catalysed reaction is (R)-pantothenate + ATP = (R)-4'-phosphopantothenate + ADP + H(+). It functions in the pathway cofactor biosynthesis; coenzyme A biosynthesis; CoA from (R)-pantothenate: step 1/5. In terms of biological role, catalyzes the phosphorylation of pantothenate (Pan), the first step in CoA biosynthesis. This is Type III pantothenate kinase from Nitrosospira multiformis (strain ATCC 25196 / NCIMB 11849 / C 71).